A 59-amino-acid chain; its full sequence is Small ribosomal subunit protein bS21 (59 aa).

Belongs to the bacterial ribosomal protein bS21 family.

The sequence is that of Small ribosomal subunit protein bS21 from Acholeplasma laidlawii (strain PG-8A).